A 657-amino-acid polypeptide reads, in one-letter code: Pentatricopeptide repeat-containing protein CRR2, chloroplastic (657 aa).

The transit peptide at 1–51 (MFLSHPPQVIQPTYHTVNFLPRSPLKPPSCSVALNNPSISSGAGAKISNNQ) directs the protein to the chloroplast. PPR repeat units lie at residues 45-75 (AKISNNQLIQSLCKEGKLKQAIRVLSQESSP), 76-110 (SQQTYELLILCCGHRSSLSDALRVHRHILDNGSDQ), 111-141 (DPFLATKLIGMYSDLGSVDYARKVFDKTRKR), 142-176 (TIYVWNALFRALTLAGHGEEVLGLYWKMNRIGVES), 177-215 (DRFTYTYVLKACVASECTVNHLMKGKEIHAHLTRRGYSS), 216-246 (HVYIMTTLVDMYARFGCVDYASYVFGGMPVR), 247-277 (NVVSWSAMIACYAKNGKAFEALRTFREMMRE), 284-318 (NSVTMVSVLQACASLAALEQGKLIHGYILRRGLDS), 319-349 (ILPVISALVTMYGRCGKLEVGQRVFDRMHDR), 350-384 (DVVSWNSLISSYGVHGYGKKAIQIFEEMLANGASP), 385-420 (TPVTFVSVLGACSHEGLVEEGKRLFETMWRDHGIKP), and 421-451 (QIEHYACMVDLLGRANRLDEAAKMVQDMRTE). The type E motif stretch occupies residues 456-531 (VWGSLLGSCR…LPGRCWMEVR (76 aa)). The type E(+) motif stretch occupies residues 532–562 (RKMYSFVSVDEFNPLMEQIHAFLVKLAEDMK). The segment at 563–657 (EKGYIPQTKG…NGVCSCGDYW (95 aa)) is type DYW motif.

It belongs to the PPR family. PCMP-H subfamily.

It is found in the plastid. It localises to the chloroplast. Functionally, required for the intergenic processing between chloroplast rsp7 and ndhB transcripts. Necessary for chloroplast NADH dehydrogenase-like (NDH) complex-dependent cyclic electron transport around PSI (CET). This chain is Pentatricopeptide repeat-containing protein CRR2, chloroplastic, found in Arabidopsis thaliana (Mouse-ear cress).